The primary structure comprises 226 residues: PKHD-type hydroxylase PST_0995 (226 aa).

The 101-residue stretch at lysine 78 to serine 178 folds into the Fe2OG dioxygenase domain. Fe cation contacts are provided by histidine 96, aspartate 98, and histidine 159. Arginine 169 contacts 2-oxoglutarate.

It depends on Fe(2+) as a cofactor. L-ascorbate serves as cofactor.

The chain is PKHD-type hydroxylase PST_0995 from Stutzerimonas stutzeri (strain A1501) (Pseudomonas stutzeri).